The sequence spans 338 residues: Lipoate-protein ligase A (338 aa).

A BPL/LPL catalytic domain is found at 29–216 (PATQRVLFLW…AFFAHYGERV (188 aa)). ATP is bound by residues Arg71, 76 to 79 (GAVF), and Lys134. Lys134 lines the (R)-lipoate pocket.

The protein belongs to the LplA family. Monomer.

It is found in the cytoplasm. It catalyses the reaction L-lysyl-[lipoyl-carrier protein] + (R)-lipoate + ATP = N(6)-[(R)-lipoyl]-L-lysyl-[lipoyl-carrier protein] + AMP + diphosphate + H(+). It participates in protein modification; protein lipoylation via exogenous pathway; protein N(6)-(lipoyl)lysine from lipoate: step 1/2. It functions in the pathway protein modification; protein lipoylation via exogenous pathway; protein N(6)-(lipoyl)lysine from lipoate: step 2/2. Functionally, catalyzes both the ATP-dependent activation of exogenously supplied lipoate to lipoyl-AMP and the transfer of the activated lipoyl onto the lipoyl domains of lipoate-dependent enzymes. This Escherichia coli O139:H28 (strain E24377A / ETEC) protein is Lipoate-protein ligase A.